The primary structure comprises 53 residues: LTCLICPEKYCNKVHTCLNGEKIYDQRKYIRGCADTCPVRKPREIVECCSTDK.

Disulfide bonds link Cys-6-Cys-11, Cys-17-Cys-33, and Cys-37-Cys-48.

Belongs to the three-finger toxin family. Ancestral subfamily. Orphan group II sub-subfamily. As to expression, expressed by the venom gland.

The protein resides in the secreted. Functionally, binds with low affinity and weakly inhibits muscle nicotinic acetylcholine receptor (nAChR). The chain is Weak toxin NWT from Naja kaouthia (Monocled cobra).